The chain runs to 238 residues: Survival of motor neuron-related-splicing factor 30 (238 aa).

Residues S72–K132 enclose the Tudor domain. Positions K142–K160 match the Nuclear localization signal motif.

Belongs to the SMN family. Associates with spliceosomes.

It localises to the nucleus speckle. The protein resides in the nucleus. It is found in the cajal body. Functionally, involved in spliceosome assembly. This Xenopus tropicalis (Western clawed frog) protein is Survival of motor neuron-related-splicing factor 30 (smndc1).